The sequence spans 512 residues: 2,3-bisphosphoglycerate-independent phosphoglycerate mutase (512 aa).

Mn(2+)-binding residues include Asp-13 and Ser-63. The active-site Phosphoserine intermediate is the Ser-63. Residues His-124, 154-155 (RD), Arg-186, Arg-192, 262-265 (RPDR), and Lys-337 each bind substrate. Mn(2+) contacts are provided by Asp-404, His-408, Asp-445, His-446, and His-463.

This sequence belongs to the BPG-independent phosphoglycerate mutase family. As to quaternary structure, monomer. It depends on Mn(2+) as a cofactor.

It carries out the reaction (2R)-2-phosphoglycerate = (2R)-3-phosphoglycerate. Its pathway is carbohydrate degradation; glycolysis; pyruvate from D-glyceraldehyde 3-phosphate: step 3/5. In terms of biological role, essential for rapid growth and for sporulation. Catalyzes the interconversion of 2-phosphoglycerate and 3-phosphoglycerate. This Oceanobacillus iheyensis (strain DSM 14371 / CIP 107618 / JCM 11309 / KCTC 3954 / HTE831) protein is 2,3-bisphosphoglycerate-independent phosphoglycerate mutase.